Here is a 154-residue protein sequence, read N- to C-terminus: Protein X (154 aa).

Residues 68–117 (PCALRFTSARRMETTVNAPGNLPKVLHKRTLGLSVMSTTDLEAYFKDCVF) form a mitochondrial targeting sequence region.

Belongs to the orthohepadnavirus protein X family. May form homodimer. May interact with host CEBPA, CFLAR, CREB1, DDB1, E4F1, HBXIP, HSPD1/HSP60, NFKBIA, POLR2E and SMAD4. Interacts with host SMC5-SMC6 complex and induces its degradation. Interacts with host TRPC4AP; leading to prevent ubiquitination of TRPC4AP. Interacts with host PLSCR1; this interaction promotes ubiquitination and degradation of HBx and impairs HBx-mediated cell proliferation. Post-translationally, a fraction may be phosphorylated in insect cells and HepG2 cells, a human hepatoblastoma cell line. Phosphorylated in vitro by host protein kinase C or mitogen-activated protein kinase. N-acetylated in insect cells.

Its subcellular location is the host cytoplasm. The protein resides in the host nucleus. It localises to the host mitochondrion. Multifunctional protein that plays a role in silencing host antiviral defenses and promoting viral transcription. Does not seem to be essential for HBV infection. May be directly involved in development of cirrhosis and liver cancer (hepatocellular carcinoma). Most of cytosolic activities involve modulation of cytosolic calcium. The effect on apoptosis is controversial depending on the cell types in which the studies have been conducted. May induce apoptosis by localizing in mitochondria and causing loss of mitochondrial membrane potential. May also modulate apoptosis by binding host CFLAR, a key regulator of the death-inducing signaling complex (DISC). Promotes viral transcription by using the host E3 ubiquitin ligase DDB1 to target the SMC5-SMC6 complex to proteasomal degradation. This host complex would otherwise bind to viral episomal DNA, and prevents its transcription. Moderately stimulates transcription of many different viral and cellular transcription elements. Promoters and enhancers stimulated by HBx contain DNA binding sites for NF-kappa-B, AP-1, AP-2, c-EBP, ATF/CREB, or the calcium-activated factor NF-AT. In Hepatitis B virus genotype B2 (isolate Vietnam/16091/1992) (HBV-B), this protein is Protein X.